Reading from the N-terminus, the 201-residue chain is Putative amino-acid transporter Mb0498 (201 aa).

5 consecutive transmembrane segments (helical) span residues 25-45 (VLVI…AGVG), 57-77 (MTLV…LLAA), 104-124 (LVVT…IGAL), 133-153 (WFFG…LGFS), and 169-189 (ILDA…LVTS).

This sequence belongs to the LysE/ArgO transporter (TC 2.A.75) family.

It is found in the cell membrane. The sequence is that of Putative amino-acid transporter Mb0498 from Mycobacterium bovis (strain ATCC BAA-935 / AF2122/97).